A 271-amino-acid polypeptide reads, in one-letter code: MKLAERTAADLRFARAGAHTVLTRRRHRWPFVIGRVFADPQDPGLGTLTLQNAAGTVIPGDVIRQRIEVVDGGRAAVNGQGATLISGVPGGDASAEETELYVDAHSWLRFDPAPRILTAHARHRQRTEVCVAHRGCAVVVDAVVLHPDLDAATFGSIESTVTVRSPGGALLAMDAQVLDAPPVTGRFTAFGTVYFVGAGFTGGHHEGPTDPPGVYTAVTELPNGAGCAVRIAAADGGTLRTYLRLLSAETAFQRASTRTFTDGMPFRRSQV.

This sequence belongs to the UreD family. UreD, UreF and UreG form a complex that acts as a GTP-hydrolysis-dependent molecular chaperone, activating the urease apoprotein by helping to assemble the nickel containing metallocenter of UreC. The UreE protein probably delivers the nickel.

It is found in the cytoplasm. Required for maturation of urease via the functional incorporation of the urease nickel metallocenter. In Mycolicibacterium smegmatis (strain ATCC 700084 / mc(2)155) (Mycobacterium smegmatis), this protein is Urease accessory protein UreD.